The following is a 35-amino-acid chain: Photosystem II reaction center protein M (35 aa).

A helical membrane pass occupies residues 5-25; it reads ILGLIATALFILIPTSFLIIL.

Belongs to the PsbM family. PSII is composed of 1 copy each of membrane proteins PsbA, PsbB, PsbC, PsbD, PsbE, PsbF, PsbH, PsbI, PsbJ, PsbK, PsbL, PsbM, PsbT, PsbX, PsbY, PsbZ, Psb30/Ycf12, at least 3 peripheral proteins of the oxygen-evolving complex and a large number of cofactors. It forms dimeric complexes.

The protein resides in the plastid. Its subcellular location is the chloroplast thylakoid membrane. One of the components of the core complex of photosystem II (PSII). PSII is a light-driven water:plastoquinone oxidoreductase that uses light energy to abstract electrons from H(2)O, generating O(2) and a proton gradient subsequently used for ATP formation. It consists of a core antenna complex that captures photons, and an electron transfer chain that converts photonic excitation into a charge separation. This subunit is found at the monomer-monomer interface. The sequence is that of Photosystem II reaction center protein M from Oltmannsiellopsis viridis (Marine flagellate).